A 130-amino-acid chain; its full sequence is Histone H2A type 1 (130 aa).

Residues 1-22 are disordered; the sequence is MSGRGKQGGKTRAKAKTRSSRA. At Ser2 the chain carries N-acetylserine. At Ser2 the chain carries Phosphoserine. Lys6 carries the N6-(2-hydroxyisobutyryl)lysine modification. Lys6 bears the N6-acetyllysine mark. The segment covering 7–19 has biased composition (basic residues); sequence QGGKTRAKAKTRS. Residue Lys10 is modified to N6-(2-hydroxyisobutyryl)lysine; alternate. Residue Lys10 is modified to N6-lactoyllysine; alternate. Residue Lys10 is modified to N6-succinyllysine. Residues Lys14 and Lys16 each participate in a glycyl lysine isopeptide (Lys-Gly) (interchain with G-Cter in ubiquitin) cross-link. At Lys37 the chain carries N6-(2-hydroxyisobutyryl)lysine; alternate. Lys75 and Lys76 each carry N6-(2-hydroxyisobutyryl)lysine. N6-(2-hydroxyisobutyryl)lysine; alternate is present on Lys96. Lys96 carries the post-translational modification N6-succinyllysine. Lys96 is modified (N6-glutaryllysine; alternate). Gln105 bears the N5-methylglutamine mark. Lys119 carries the post-translational modification N6-(2-hydroxyisobutyryl)lysine; alternate. Lys119 is subject to N6-glutaryllysine; alternate. Lys120 participates in a covalent cross-link: Glycyl lysine isopeptide (Lys-Gly) (interchain with G-Cter in ubiquitin).

Belongs to the histone H2A family. As to quaternary structure, the nucleosome is a histone octamer containing two molecules each of H2A, H2B, H3 and H4 assembled in one H3-H4 heterotetramer and two H2A-H2B heterodimers. The octamer wraps approximately 147 bp of DNA. In terms of processing, monoubiquitination of Lys-120 (H2AK119Ub) gives a specific tag for epigenetic transcriptional repression. Following DNA double-strand breaks (DSBs), it is ubiquitinated through 'Lys-63' linkage of ubiquitin moieties, leading to the recruitment of repair proteins to sites of DNA damage. H2AK119Ub and ionizing radiation-induced 'Lys-63'-linked ubiquitination are distinct events. Phosphorylation on Ser-2 is enhanced during mitosis. Phosphorylation on Ser-2 directly represses transcription. Post-translationally, glutamine methylation at Gln-105 (H2AQ104me) by FBL is specifically dedicated to polymerase I. It is present at 35S ribosomal DNA locus and impairs binding of the FACT complex.

Its subcellular location is the nucleus. It is found in the chromosome. Core component of nucleosome. Nucleosomes wrap and compact DNA into chromatin, limiting DNA accessibility to the cellular machineries which require DNA as a template. Histones thereby play a central role in transcription regulation, DNA repair, DNA replication and chromosomal stability. DNA accessibility is regulated via a complex set of post-translational modifications of histones, also called histone code, and nucleosome remodeling. The polypeptide is Histone H2A type 1 (Xenopus laevis (African clawed frog)).